Reading from the N-terminus, the 66-residue chain is Large ribosomal subunit protein uL29 (66 aa).

The protein belongs to the universal ribosomal protein uL29 family.

This chain is Large ribosomal subunit protein uL29, found in Kosmotoga olearia (strain ATCC BAA-1733 / DSM 21960 / TBF 19.5.1).